The sequence spans 185 residues: Protein FAM219A (185 aa).

Met-1 is subject to N-acetylmethionine. Residues 1–131 (MMEEIDRFQV…SRYSSSGYSS (131 aa)) form a disordered region. The residue at position 47 (Ser-47) is a Phosphoserine. Residues 52–61 (KLEKQRELAR) are compositionally biased toward basic and acidic residues. The span at 66-80 (KNGSMGSPVNQQPKK) shows a compositional bias: polar residues. Phosphoserine is present on residues Ser-72 and Ser-102. Thr-113 carries the post-translational modification Phosphothreonine. Residues Ser-115 and Ser-122 each carry the phosphoserine modification. Low complexity predominate over residues 122-131 (SRYSSSGYSS).

Belongs to the FAM219 family.

The sequence is that of Protein FAM219A (FAM219A) from Homo sapiens (Human).